Reading from the N-terminus, the 97-residue chain is MKLRPLHDRVVIRRSEEESKTAGGIVLPGSAAEKPNRGEVVAVGTGRILDNGEVRALAVKVGDKVVFGPYSGSNTVKVDGEDLLVMSENEILAVVEG.

It belongs to the GroES chaperonin family. In terms of assembly, heptamer of 7 subunits arranged in a ring. Interacts with the chaperonin GroEL.

Its subcellular location is the cytoplasm. In terms of biological role, together with the chaperonin GroEL, plays an essential role in assisting protein folding. The GroEL-GroES system forms a nano-cage that allows encapsulation of the non-native substrate proteins and provides a physical environment optimized to promote and accelerate protein folding. GroES binds to the apical surface of the GroEL ring, thereby capping the opening of the GroEL channel. The protein is Co-chaperonin GroES of Pseudomonas putida (strain W619).